Here is a 294-residue protein sequence, read N- to C-terminus: Indole-3-glycerol phosphate synthase (294 aa).

It belongs to the TrpC family.

The enzyme catalyses 1-(2-carboxyphenylamino)-1-deoxy-D-ribulose 5-phosphate + H(+) = (1S,2R)-1-C-(indol-3-yl)glycerol 3-phosphate + CO2 + H2O. The protein operates within amino-acid biosynthesis; L-tryptophan biosynthesis; L-tryptophan from chorismate: step 4/5. The sequence is that of Indole-3-glycerol phosphate synthase from Synechococcus sp. (strain WH7803).